An 84-amino-acid chain; its full sequence is Toxin Tf2 (84 aa).

The first 20 residues, M1–G20, serve as a signal peptide directing secretion. The LCN-type CS-alpha/beta domain maps to K21 to G83. Intrachain disulfides connect C31/C82, C35/C58, C43/C63, and C47/C65. C82 bears the Cysteine amide mark.

This sequence belongs to the long (4 C-C) scorpion toxin superfamily. Sodium channel inhibitor family. Beta subfamily. Contains 4 disulfide bonds. In terms of tissue distribution, expressed by the venom gland.

Its subcellular location is the secreted. Functionally, beta toxins bind voltage-independently at site-4 of sodium channels (Nav) and shift the voltage of activation toward more negative potentials thereby affecting sodium channel activation and promoting spontaneous and repetitive firing. This toxin is active against hNav1.3/SCN3A. The chain is Toxin Tf2 from Tityus fasciolatus (Central Brazilian scorpion).